Reading from the N-terminus, the 49-residue chain is Splenin (49 aa).

Positions 4–47 constitute an LEM-like domain; sequence LEDPSVLTKEKLKSELVANNVTLPAGEQRKEVYVELYLQHLTAL. The segment at 32–36 is essential for biological activity; sequence RKEVY.

This sequence belongs to the thymopoietin family.

Hormone of the spleen with pleiotropic actions on prothymocytes, mature T-cells, the nicotinic acetylcholine receptor, and pituitary corticotrophs. This chain is Splenin (SP), found in Bos taurus (Bovine).